The sequence spans 483 residues: Glutamyl-tRNA(Gln) amidotransferase subunit A (483 aa).

Active-site charge relay system residues include Lys76 and Ser151. Catalysis depends on Ser175, which acts as the Acyl-ester intermediate.

This sequence belongs to the amidase family. GatA subfamily. In terms of assembly, heterotrimer of A, B and C subunits.

The catalysed reaction is L-glutamyl-tRNA(Gln) + L-glutamine + ATP + H2O = L-glutaminyl-tRNA(Gln) + L-glutamate + ADP + phosphate + H(+). Its function is as follows. Allows the formation of correctly charged Gln-tRNA(Gln) through the transamidation of misacylated Glu-tRNA(Gln) in organisms which lack glutaminyl-tRNA synthetase. The reaction takes place in the presence of glutamine and ATP through an activated gamma-phospho-Glu-tRNA(Gln). The chain is Glutamyl-tRNA(Gln) amidotransferase subunit A from Pseudomonas syringae pv. tomato (strain ATCC BAA-871 / DC3000).